The sequence spans 439 residues: Ribosomal protein uS12 methylthiotransferase RimO (439 aa).

Residues 7-122 (QTIAVIALGC…LPDLVFGKNF (116 aa)) form the MTTase N-terminal domain. Residues cysteine 16, cysteine 52, cysteine 85, cysteine 155, cysteine 159, and cysteine 162 each coordinate [4Fe-4S] cluster. Positions 141–369 (SSTIPSAYLK…NAQYNIFQAK (229 aa)) constitute a Radical SAM core domain.

The protein belongs to the methylthiotransferase family. RimO subfamily. It depends on [4Fe-4S] cluster as a cofactor.

The protein localises to the cytoplasm. The catalysed reaction is L-aspartate(89)-[ribosomal protein uS12]-hydrogen + (sulfur carrier)-SH + AH2 + 2 S-adenosyl-L-methionine = 3-methylsulfanyl-L-aspartate(89)-[ribosomal protein uS12]-hydrogen + (sulfur carrier)-H + 5'-deoxyadenosine + L-methionine + A + S-adenosyl-L-homocysteine + 2 H(+). Its function is as follows. Catalyzes the methylthiolation of an aspartic acid residue of ribosomal protein uS12. The chain is Ribosomal protein uS12 methylthiotransferase RimO from Endomicrobium trichonymphae.